Consider the following 500-residue polypeptide: Cytochrome P450 71D7 (500 aa).

Residue Cys441 participates in heme binding.

Belongs to the cytochrome P450 family. The cofactor is heme.

The sequence is that of Cytochrome P450 71D7 (CYP71D7) from Solanum chacoense (Chaco potato).